Consider the following 379-residue polypeptide: Queuine tRNA-ribosyltransferase (379 aa).

Residue D94 is the Proton acceptor of the active site. Substrate-binding positions include 94–98 (DSGGF), D148, Q191, and G218. Positions 249 to 255 (GVGSPDS) are RNA binding. The active-site Nucleophile is D268. Residues 273 to 277 (TRIAR) are RNA binding; important for wobble base 34 recognition. Residues C306, C308, C311, and H337 each coordinate Zn(2+).

It belongs to the queuine tRNA-ribosyltransferase family. As to quaternary structure, homodimer. Within each dimer, one monomer is responsible for RNA recognition and catalysis, while the other monomer binds to the replacement base PreQ1. The cofactor is Zn(2+).

It catalyses the reaction 7-aminomethyl-7-carbaguanine + guanosine(34) in tRNA = 7-aminomethyl-7-carbaguanosine(34) in tRNA + guanine. It functions in the pathway tRNA modification; tRNA-queuosine biosynthesis. Functionally, catalyzes the base-exchange of a guanine (G) residue with the queuine precursor 7-aminomethyl-7-deazaguanine (PreQ1) at position 34 (anticodon wobble position) in tRNAs with GU(N) anticodons (tRNA-Asp, -Asn, -His and -Tyr). Catalysis occurs through a double-displacement mechanism. The nucleophile active site attacks the C1' of nucleotide 34 to detach the guanine base from the RNA, forming a covalent enzyme-RNA intermediate. The proton acceptor active site deprotonates the incoming PreQ1, allowing a nucleophilic attack on the C1' of the ribose to form the product. After dissociation, two additional enzymatic reactions on the tRNA convert PreQ1 to queuine (Q), resulting in the hypermodified nucleoside queuosine (7-(((4,5-cis-dihydroxy-2-cyclopenten-1-yl)amino)methyl)-7-deazaguanosine). This Listeria welshimeri serovar 6b (strain ATCC 35897 / DSM 20650 / CCUG 15529 / CIP 8149 / NCTC 11857 / SLCC 5334 / V8) protein is Queuine tRNA-ribosyltransferase.